Consider the following 145-residue polypeptide: LIRP (145 aa).

A signal peptide (or 22) is located at residues 1–19 (MWKLCLRLLAVLAVCLSTA). Propeptides lie at residues 20–33 (TQAQ…SPKR) and 117–122 (FRRRTR). 3 disulfide bridges follow: Cys-44–Cys-129, Cys-56–Cys-142, and Cys-128–Cys-133.

It belongs to the insulin family. Heterodimer of a B chain and an A chain linked by two disulfide bonds.

Its subcellular location is the secreted. The protein is LIRP of Locusta migratoria (Migratory locust).